The primary structure comprises 487 residues: Glutamate--tRNA ligase (487 aa).

Residues 12–22 (PSPTGYMHVGN) carry the 'HIGH' region motif. Residues 249-253 (KLSKR) carry the 'KMSKS' region motif. Lys-252 serves as a coordination point for ATP.

Belongs to the class-I aminoacyl-tRNA synthetase family. Glutamate--tRNA ligase type 1 subfamily. In terms of assembly, monomer.

It localises to the cytoplasm. The enzyme catalyses tRNA(Glu) + L-glutamate + ATP = L-glutamyl-tRNA(Glu) + AMP + diphosphate. Its function is as follows. Catalyzes the attachment of glutamate to tRNA(Glu) in a two-step reaction: glutamate is first activated by ATP to form Glu-AMP and then transferred to the acceptor end of tRNA(Glu). The polypeptide is Glutamate--tRNA ligase (Clostridium novyi (strain NT)).